The sequence spans 501 residues: Sodium-coupled neutral amino acid symporter 2 (501 aa).

The disordered stretch occupies residues 1–26 (MSSAEMGKFDISPDEDSSSYSSNSND). Over 1–77 (MSSAEMGKFD…HPGTTSFGMS (77 aa)) the chain is Cytoplasmic. The regulates protein turnover upon amino acid deprivation stretch occupies residues 1–97 (MSSAEMGKFD…SGILGLSYAM (97 aa)). Residues 78–97 (VFNLSNAIVGSGILGLSYAM) traverse the membrane as a helical segment. Position 83 (N83) interacts with Na(+). Topologically, residues 98 to 103 (ANTGIA) are extracellular. A helical membrane pass occupies residues 104-124 (LFVILLLVVSILSLYSVHLLL). At 125–159 (KTANEGGSLLYEQLGMKAFGMPGKLAASGSITMQN) the chain is on the cytoplasmic side. A helical transmembrane segment spans residues 160–178 (IGAMSSYLFIVKYELPLVI). At 179–189 (KTFMNIEENAG) the chain is on the extracellular side. The helical transmembrane segment at 190–210 (HWYLNGDYLVLLVSVILILPL) threads the bilayer. Over 211–218 (SLLKNLGY) the chain is Cytoplasmic. The chain crosses the membrane as a helical span at residues 219–239 (LGYTSGFSLLCMVFFLIVVIW). Over 240–287 (KMFQIPCPMESDIINATLINATLAPFADENITISDACKPEYFIFNSQT) the chain is Extracellular. C246 and C276 are oxidised to a cystine. N-linked (GlcNAc...) asparagine glycosylation is found at N254 and N259. The chain crosses the membrane as a helical span at residues 288–308 (VYAVPILTFSFVCHPAILPIY). Residues 309-324 (EELKSRSRKRMMNVSY) lie on the Cytoplasmic side of the membrane. Residues 325-345 (VSFFAMFLMYLLAALFGYLTF) traverse the membrane as a helical segment. Residues 346 to 366 (YGRVESELLHTYSAFLGADIL) are Extracellular-facing. The chain crosses the membrane as a helical span at residues 367-387 (LLIVRLAVLMAVTLTVPVVIF). T381 serves as a coordination point for Na(+). The Cytoplasmic segment spans residues 388-408 (PIRSSVTQLLWAGKEFSWWRH). Residues 409 to 429 (CSITVVLLAFTNVLVIFVPTI) traverse the membrane as a helical segment. Residues 430–431 (RD) lie on the Extracellular side of the membrane. The chain crosses the membrane as a helical span at residues 432–452 (IFGFIGASAAAMLIFILPSAF). Topologically, residues 453–467 (YIKLVKKEPMKSVQK) are cytoplasmic. Residues 468-490 (IGAALFFLSGILVMTGCMTLIIL) form a helical membrane-spanning segment. Topologically, residues 491–501 (DWIHTDASDGH) are extracellular.

It belongs to the amino acid/polyamine transporter 2 family.

The protein resides in the cell membrane. It carries out the reaction L-alanine(in) + Na(+)(in) = L-alanine(out) + Na(+)(out). The enzyme catalyses glycine(in) + Na(+)(in) = glycine(out) + Na(+)(out). It catalyses the reaction L-serine(in) + Na(+)(in) = L-serine(out) + Na(+)(out). The catalysed reaction is L-proline(in) + Na(+)(in) = L-proline(out) + Na(+)(out). It carries out the reaction L-methionine(in) + Na(+)(in) = L-methionine(out) + Na(+)(out). The enzyme catalyses L-histidine(in) + Na(+)(in) = L-histidine(out) + Na(+)(out). It catalyses the reaction L-asparagine(in) + Na(+)(in) = L-asparagine(out) + Na(+)(out). The catalysed reaction is L-glutamine(in) + Na(+)(in) = L-glutamine(out) + Na(+)(out). It carries out the reaction L-threonine(in) + Na(+)(in) = L-threonine(out) + Na(+)(out). The enzyme catalyses L-leucine(in) + Na(+)(in) = L-leucine(out) + Na(+)(out). It catalyses the reaction L-phenylalanine(in) + Na(+)(in) = L-phenylalanine(out) + Na(+)(out). Inhibited by N-methyl-D-glucamine. Inhibited by choline. Allosteric regulation of sodium ions binding by pH. Functionally, symporter that cotransports neutral amino acids and sodium ions from the extracellular to the intracellular side of the cell membrane. The transport is pH-sensitive, Li(+)-intolerant, electrogenic, driven by the Na(+) electrochemical gradient and cotransports of neutral amino acids and sodium ions with a stoichiometry of 1:1. This Gallus gallus (Chicken) protein is Sodium-coupled neutral amino acid symporter 2.